The sequence spans 349 residues: Protein BCCIP homolog (349 aa).

Basic residues predominate over residues 1 to 10 (MGRVFKKKGG). The interval 1–65 (MGRVFKKKGG…DDEEEDEDEQ (65 aa)) is disordered. A compositionally biased stretch (basic and acidic residues) spans 11–33 (AKREAEEEKQEELVMRKKLRKEE). Residues 34-65 (EPEPVEDVEEDEDVSDEDDEDIDDEEEDEDEQ) are compositionally biased toward acidic residues.

This sequence belongs to the BCP1 family.

This Caenorhabditis elegans protein is Protein BCCIP homolog.